A 409-amino-acid polypeptide reads, in one-letter code: Peptidase T (409 aa).

Position 78 (H78) interacts with Zn(2+). Residue D80 is part of the active site. D140 is a binding site for Zn(2+). E173 (proton acceptor) is an active-site residue. Zn(2+) is bound by residues E174, D196, and H379.

It belongs to the peptidase M20B family. The cofactor is Zn(2+).

It localises to the cytoplasm. The catalysed reaction is Release of the N-terminal residue from a tripeptide.. Its function is as follows. Cleaves the N-terminal amino acid of tripeptides. The sequence is that of Peptidase T from Escherichia coli (strain SE11).